Here is a 151-residue protein sequence, read N- to C-terminus: Methylated-DNA--protein-cysteine methyltransferase (151 aa).

Cysteine 119 (nucleophile; methyl group acceptor) is an active-site residue.

The protein belongs to the MGMT family.

It is found in the cytoplasm. The catalysed reaction is a 6-O-methyl-2'-deoxyguanosine in DNA + L-cysteinyl-[protein] = S-methyl-L-cysteinyl-[protein] + a 2'-deoxyguanosine in DNA. The enzyme catalyses a 4-O-methyl-thymidine in DNA + L-cysteinyl-[protein] = a thymidine in DNA + S-methyl-L-cysteinyl-[protein]. Its function is as follows. Involved in the cellular defense against the biological effects of O6-methylguanine (O6-MeG) and O4-methylthymine (O4-MeT) in DNA. Repairs the methylated nucleobase in DNA by stoichiometrically transferring the methyl group to a cysteine residue in the enzyme. This is a suicide reaction: the enzyme is irreversibly inactivated. In Saccharolobus islandicus (strain M.16.27) (Sulfolobus islandicus), this protein is Methylated-DNA--protein-cysteine methyltransferase.